Reading from the N-terminus, the 559-residue chain is Probable D-2-hydroxyglutarate dehydrogenase, mitochondrial (559 aa).

A mitochondrion-targeting transit peptide spans 1–80 (MARRAAAGLL…MNFEVQKRSF (80 aa)). Positions 131–310 (YKGSSQLLLL…TKIAILTPAK (180 aa)) constitute an FAD-binding PCMH-type domain.

It belongs to the FAD-binding oxidoreductase/transferase type 4 family. As to quaternary structure, homodimer. The cofactor is FAD.

It localises to the mitochondrion. The enzyme catalyses (R)-2-hydroxyglutarate + A = 2-oxoglutarate + AH2. Catalyzes the oxidation of D-2-hydroxyglutarate to alpha-ketoglutarate. This Oryza sativa subsp. indica (Rice) protein is Probable D-2-hydroxyglutarate dehydrogenase, mitochondrial (D2HGDH).